The chain runs to 355 residues: Peptide chain release factor 1 (355 aa).

An N5-methylglutamine modification is found at Gln-231.

This sequence belongs to the prokaryotic/mitochondrial release factor family. Methylated by PrmC. Methylation increases the termination efficiency of RF1.

The protein localises to the cytoplasm. Its function is as follows. Peptide chain release factor 1 directs the termination of translation in response to the peptide chain termination codons UAG and UAA. This is Peptide chain release factor 1 from Wolinella succinogenes (strain ATCC 29543 / DSM 1740 / CCUG 13145 / JCM 31913 / LMG 7466 / NCTC 11488 / FDC 602W) (Vibrio succinogenes).